Consider the following 222-residue polypeptide: UPF0758 protein CT0611 (222 aa).

Positions 100–222 (KVKGARDVFE…WFSFRDHALL (123 aa)) constitute an MPN domain. 3 residues coordinate Zn(2+): histidine 171, histidine 173, and aspartate 184. The JAMM motif signature appears at 171–184 (HNHPSGDVQPSNAD).

It belongs to the UPF0758 family.

This Chlorobaculum tepidum (strain ATCC 49652 / DSM 12025 / NBRC 103806 / TLS) (Chlorobium tepidum) protein is UPF0758 protein CT0611.